Here is a 184-residue protein sequence, read N- to C-terminus: U3 small nucleolar ribonucleoprotein protein IMP3 (184 aa).

Residues 109 to 175 (RRLPTLLLKL…IKRHVLEYNE (67 aa)) enclose the S4 RNA-binding domain.

This sequence belongs to the universal ribosomal protein uS4 family. Part of the small subunit (SSU) processome, composed of more than 70 proteins and the RNA chaperone small nucleolar RNA (snoRNA) U3. Component of a heterotrimeric complex containing IMP3, IMP4 and MPHOSPH10. Interacts with MPHOSPH10.

It localises to the nucleus. Its subcellular location is the nucleolus. Its function is as follows. Component of the 60-80S U3 small nucleolar ribonucleoprotein (U3 snoRNP). Required for the early cleavages during pre-18S ribosomal RNA processing. Part of the small subunit (SSU) processome, first precursor of the small eukaryotic ribosomal subunit. During the assembly of the SSU processome in the nucleolus, many ribosome biogenesis factors, an RNA chaperone and ribosomal proteins associate with the nascent pre-rRNA and work in concert to generate RNA folding, modifications, rearrangements and cleavage as well as targeted degradation of pre-ribosomal RNA by the RNA exosome. The protein is U3 small nucleolar ribonucleoprotein protein IMP3 (Imp3) of Mus musculus (Mouse).